The following is a 480-amino-acid chain: Coronin-2B (480 aa).

WD repeat units lie at residues 85–125 (GHQG…LKRN), 135–177 (GHSR…KMID), 179–217 (HRDV…VLQE), 220–263 (CKTH…MPVT), and 265–308 (EEID…PYLT). A coiled-coil region spans residues 436–475 (NELLRMFFRQQEEIRRLKEQLSQRDLLVRQLELELKNLRN).

This sequence belongs to the WD repeat coronin family.

Its subcellular location is the cytoplasm. It is found in the cytoskeleton. Functionally, may play a role in the reorganization of neuronal actin structure. This chain is Coronin-2B (coro2b), found in Xenopus tropicalis (Western clawed frog).